A 214-amino-acid polypeptide reads, in one-letter code: Probable nicotinate-nucleotide adenylyltransferase (214 aa).

The protein belongs to the NadD family.

It carries out the reaction nicotinate beta-D-ribonucleotide + ATP + H(+) = deamido-NAD(+) + diphosphate. The protein operates within cofactor biosynthesis; NAD(+) biosynthesis; deamido-NAD(+) from nicotinate D-ribonucleotide: step 1/1. Its function is as follows. Catalyzes the reversible adenylation of nicotinate mononucleotide (NaMN) to nicotinic acid adenine dinucleotide (NaAD). This chain is Probable nicotinate-nucleotide adenylyltransferase, found in Aeromonas hydrophila subsp. hydrophila (strain ATCC 7966 / DSM 30187 / BCRC 13018 / CCUG 14551 / JCM 1027 / KCTC 2358 / NCIMB 9240 / NCTC 8049).